Consider the following 288-residue polypeptide: Protoheme IX farnesyltransferase 2 (288 aa).

The next 8 helical transmembrane spans lie at 16-36, 38-58, 88-108, 111-131, 139-159, 166-186, 227-247, and 266-286; these read IGVF…GAVP, FAPV…AGAF, LWPL…AFAA, WAAL…TVWL, IVIG…VAVP, LILA…LATA, AFFG…GWFL, and FFAS…EPLL.

Belongs to the UbiA prenyltransferase family. Protoheme IX farnesyltransferase subfamily.

It localises to the cell inner membrane. It catalyses the reaction heme b + (2E,6E)-farnesyl diphosphate + H2O = Fe(II)-heme o + diphosphate. It participates in porphyrin-containing compound metabolism; heme O biosynthesis; heme O from protoheme: step 1/1. Its function is as follows. Converts heme B (protoheme IX) to heme O by substitution of the vinyl group on carbon 2 of heme B porphyrin ring with a hydroxyethyl farnesyl side group. The protein is Protoheme IX farnesyltransferase 2 of Paramagnetospirillum magneticum (strain ATCC 700264 / AMB-1) (Magnetospirillum magneticum).